The sequence spans 177 residues: Early nodulin-like protein 6 (177 aa).

The first 23 residues, methionine 1 to cysteine 23, serve as a signal peptide directing secretion. The Phytocyanin domain occupies threonine 24–glutamate 127. An N-linked (GlcNAc...) asparagine glycan is attached at asparagine 41. The cysteines at positions 81 and 115 are disulfide-linked. Asparagine 149 is lipidated: GPI-anchor amidated asparagine. The propeptide at histidine 150 to valine 177 is removed in mature form.

This sequence belongs to the early nodulin-like (ENODL) family. In terms of tissue distribution, confined to flowers.

The protein localises to the cell membrane. May act as a carbohydrate transporter. In Arabidopsis thaliana (Mouse-ear cress), this protein is Early nodulin-like protein 6.